We begin with the raw amino-acid sequence, 198 residues long: ADP-ribosylation factor-like protein 3 (198 aa).

Met-1 bears the N-acetylmethionine mark. Residue 24-31 (GLDNAGKT) coordinates GTP. A Glycyl lysine isopeptide (Lys-Gly) (interchain with G-Cter in ubiquitin) cross-link involves residue Lys-50. Residues 74-78 (DVGGQ) and 133-136 (NKQD) each bind GTP.

The protein belongs to the small GTPase superfamily. Arf family. In terms of assembly, interacts with SYS1 and SLO1.

It is found in the golgi apparatus. Involved in the targeting of ARL1 to the Golgi. Can bind and hydrolyze GTP. The polypeptide is ADP-ribosylation factor-like protein 3 (ARL3) (Saccharomyces cerevisiae (strain ATCC 204508 / S288c) (Baker's yeast)).